Consider the following 188-residue polypeptide: Interferon alpha-2 (188 aa).

A signal peptide spans 1-23; sequence MALTFALLVALLVLSCKSSCSVG. Intrachain disulfides connect cysteine 24–cysteine 121 and cysteine 52–cysteine 161. Threonine 129 carries O-linked (GalNAc...) threonine glycosylation.

The protein belongs to the alpha/beta interferon family. As to quaternary structure, interacts with IFNAR2.

It is found in the secreted. Its function is as follows. Produced by macrophages, IFN-alpha have antiviral activities. This is Interferon alpha-2 (IFNA2) from Homo sapiens (Human).